The following is a 123-amino-acid chain: Proteasome assembly chaperone 4 (123 aa).

Belongs to the PSMG4 family. Interacts with PSMG3. Associates with alpha subunits of the 20S proteasome.

In terms of biological role, chaperone protein which promotes assembly of the 20S proteasome. This is Proteasome assembly chaperone 4 from Homo sapiens (Human).